The primary structure comprises 252 residues: Ribosomal RNA small subunit methyltransferase J (252 aa).

Residues 126-127 and D176 each bind S-adenosyl-L-methionine; that span reads ER.

It belongs to the methyltransferase superfamily. RsmJ family.

The protein resides in the cytoplasm. It carries out the reaction guanosine(1516) in 16S rRNA + S-adenosyl-L-methionine = N(2)-methylguanosine(1516) in 16S rRNA + S-adenosyl-L-homocysteine + H(+). Functionally, specifically methylates the guanosine in position 1516 of 16S rRNA. This is Ribosomal RNA small subunit methyltransferase J from Bdellovibrio bacteriovorus (strain ATCC 15356 / DSM 50701 / NCIMB 9529 / HD100).